Here is a 171-residue protein sequence, read N- to C-terminus: MAMKTQRKENVLFQNVKPREIPLVDNPFSTYPYKHVITETQPTQAKNQAIWGLVQMGLSGEAAAMYGDVVVQKTTRACRKSEGGFKDVNTELWGTSPYLGRGDGEVYNMPASNQLLRGFESSLRGSRVRTQIDDKSFIPYTWQMIDVPLAAAKTSFIAGLDTRQQLAYGNP.

Interacts with the major capsid protein.

It is found in the virion. Functionally, one of the minor capsid proteins that constitute a network internal to the major capsid proteins and outside the lipid membrane. The minor capsid proteins glue and stabilize the capsomers. The polypeptide is Minor capsid protein 3 (Chlorella (PBCV-1)).